The sequence spans 987 residues: Ephrin type-B receptor 4 (987 aa).

A signal peptide spans 1–15 (MELRVLLCWASLAAA). The Extracellular portion of the chain corresponds to 16-539 (LEETLLNTKL…ESEGWREQLA (524 aa)). The 186-residue stretch at 17-202 (EETLLNTKLE…FYKKCAQLTV (186 aa)) folds into the Eph LBD domain. Disulfide bonds link Cys61–Cys184 and Cys97–Cys107. Asn203, Asn335, and Asn426 each carry an N-linked (GlcNAc...) asparagine glycan. 2 Fibronectin type-III domains span residues 323-432 (PPSA…TDRE) and 436-529 (AVSD…TQLD). A helical membrane pass occupies residues 540–560 (LIAGTAVVGVVLVLVVIVVAV). The Cytoplasmic segment spans residues 561-987 (LCLRKQSNGR…GGTGGPAPQY (427 aa)). Positions 615-899 (VKIEEVIGAG…ENGGASHPLL (285 aa)) constitute a Protein kinase domain. ATP contacts are provided by residues 621–629 (IGAGEFGEV) and Lys647. Asp740 functions as the Proton acceptor in the catalytic mechanism. A phosphoserine mark is found at Ser769, Ser770, Ser911, and Ser943. The region spanning 907–971 (SAFGSVGEWL…LASVQHMKSQ (65 aa)) is the SAM domain. A disordered region spans residues 965–987 (VQHMKSQAKPGTPGGTGGPAPQY). Position 976 is a phosphothreonine (Thr976). Gly residues predominate over residues 976 to 987 (TPGGTGGPAPQY). A PDZ-binding motif is present at residues 985 to 987 (PQY). Position 987 is a phosphotyrosine (Tyr987).

This sequence belongs to the protein kinase superfamily. Tyr protein kinase family. Ephrin receptor subfamily. Heterotetramer upon binding of the ligand. The heterotetramer is composed of an ephrin dimer and a receptor dimer. Oligomerization is probably required to induce biological responses. Interacts with RASA1; the interaction depends on EPHB4 tyrosine-phosphorylation. Phosphorylated; autophosphorylation is stimulated by EFNB2. As to expression, abundantly expressed in placenta but also detected in kidney, liver, lung, pancreas, skeletal muscle and heart. Expressed in primitive and myeloid, but not lymphoid, hematopoietic cells. Also observed in cell lines derived from liver, breast, colon, lung, melanocyte and cervix.

It localises to the cell membrane. The enzyme catalyses L-tyrosyl-[protein] + ATP = O-phospho-L-tyrosyl-[protein] + ADP + H(+). Receptor tyrosine kinase which binds promiscuously transmembrane ephrin-B family ligands residing on adjacent cells, leading to contact-dependent bidirectional signaling into neighboring cells. The signaling pathway downstream of the receptor is referred to as forward signaling while the signaling pathway downstream of the ephrin ligand is referred to as reverse signaling. Together with its cognate ligand/functional ligand EFNB2 it is involved in the regulation of cell adhesion and migration, and plays a central role in heart morphogenesis, angiogenesis and blood vessel remodeling and permeability. EPHB4-mediated forward signaling controls cellular repulsion and segregation from EFNB2-expressing cells. The chain is Ephrin type-B receptor 4 (EPHB4) from Homo sapiens (Human).